The following is a 331-amino-acid chain: ADP-L-glycero-D-manno-heptose-6-epimerase (331 aa).

Residues 11 to 12 (FI), 32 to 33 (DN), Lys39, Lys54, 75 to 79 (EGACS), and Asn92 each bind NADP(+). Tyr139 acts as the Proton acceptor in catalysis. Lys143 contacts NADP(+). Asn168 contacts substrate. NADP(+)-binding residues include Val169 and Lys177. Lys177 functions as the Proton acceptor in the catalytic mechanism. Substrate is bound by residues Arg179, His186, 200-203 (FGEY), Arg213, and Tyr292.

This sequence belongs to the NAD(P)-dependent epimerase/dehydratase family. HldD subfamily. Homopentamer. Requires NADP(+) as cofactor.

It carries out the reaction ADP-D-glycero-beta-D-manno-heptose = ADP-L-glycero-beta-D-manno-heptose. The protein operates within nucleotide-sugar biosynthesis; ADP-L-glycero-beta-D-manno-heptose biosynthesis; ADP-L-glycero-beta-D-manno-heptose from D-glycero-beta-D-manno-heptose 7-phosphate: step 4/4. Functionally, catalyzes the interconversion between ADP-D-glycero-beta-D-manno-heptose and ADP-L-glycero-beta-D-manno-heptose via an epimerization at carbon 6 of the heptose. The chain is ADP-L-glycero-D-manno-heptose-6-epimerase from Ralstonia pickettii (strain 12J).